A 575-amino-acid polypeptide reads, in one-letter code: Chaperonin CPN60-1, mitochondrial (575 aa).

A mitochondrion-targeting transit peptide spans 1-32; that stretch reads MHRFATGLASKARLARNGANQIASRSNWRRNY.

This sequence belongs to the chaperonin (HSP60) family.

It is found in the mitochondrion. In terms of biological role, implicated in mitochondrial protein import and macromolecular assembly. May facilitate the correct folding of imported proteins. May also prevent misfolding and promote the refolding and proper assembly of unfolded polypeptides generated under stress conditions in the mitochondrial matrix. The sequence is that of Chaperonin CPN60-1, mitochondrial (CPN60-1) from Cucurbita maxima (Pumpkin).